A 394-amino-acid chain; its full sequence is Cytochrome b (394 aa).

4 consecutive transmembrane segments (helical) span residues 39–59 (FGSLAGICLVIQIVTGVFLAM), 83–105 (WLLRYMHANGASMFFIVVYLHTF), 120–140 (VWCLGVVIFLLMIVTAFIGYV), and 186–206 (FFSLYHLLPFILVGASLLHLA). Positions 89 and 103 each coordinate heme b. Residues H191 and H204 each coordinate heme b. H209 contacts a ubiquinone. The next 4 helical transmembrane spans lie at 232-252 (FYVKDLVGWVAFAIFFSIWIF), 296-316 (AGGVAAIALVFICLLALPFFK), 328-348 (IYQGIFWLLLADCLLLGWIGC), and 355-374 (FVTIGQISSIVFFLFFAITP).

It belongs to the cytochrome b family. As to quaternary structure, the main subunits of complex b-c1 are: cytochrome b, cytochrome c1 and the Rieske protein. Heme b is required as a cofactor.

The protein localises to the mitochondrion inner membrane. Its function is as follows. Component of the ubiquinol-cytochrome c reductase complex (complex III or cytochrome b-c1 complex) that is part of the mitochondrial respiratory chain. The b-c1 complex mediates electron transfer from ubiquinol to cytochrome c. Contributes to the generation of a proton gradient across the mitochondrial membrane that is then used for ATP synthesis. The protein is Cytochrome b (MT-CYB) of Oenothera berteroana (Bertero's evening primrose).